Reading from the N-terminus, the 23-residue chain is Ocellatin-LB2 (23 aa).

At Asn23 the chain carries Asparagine amide.

Expressed by the skin glands.

It localises to the secreted. Its function is as follows. Antibacterial peptide that inhibits the Gram-negative bacterium A.actinomycetemcomitans ATCC 29522 (MIC=210 uM). No activity against the bacteria E.coli ATCC 25922 and S.aureus ATCC 25923, or the fungi C.albicans ATCC 18804 and C.lusitaniae ATCC 56936. Does not show hemolytic activity towards rabbit erythrocytes. In Leptodactylus labyrinthicus (Labyrinth frog), this protein is Ocellatin-LB2.